The primary structure comprises 164 residues: Cytochrome c-type biogenesis protein CcmE (164 aa).

The Cytoplasmic portion of the chain corresponds to 1 to 8; sequence MNPRRKKR. A helical; Signal-anchor for type II membrane protein membrane pass occupies residues 9–29; the sequence is LTLAVALIGGVAAIASLLLYA. Residues 30–164 are Periplasmic-facing; sequence LNSNLNLFFT…EDQSKAGGYK (135 aa). H131 and Y135 together coordinate heme. The interval 140 to 164 is disordered; the sequence is VAEAMGQSHEKLDYSEDQSKAGGYK. Basic and acidic residues predominate over residues 147–158; the sequence is SHEKLDYSEDQS.

Belongs to the CcmE/CycJ family.

It is found in the cell inner membrane. Functionally, heme chaperone required for the biogenesis of c-type cytochromes. Transiently binds heme delivered by CcmC and transfers the heme to apo-cytochromes in a process facilitated by CcmF and CcmH. The chain is Cytochrome c-type biogenesis protein CcmE from Shewanella piezotolerans (strain WP3 / JCM 13877).